The primary structure comprises 311 residues: L-lactate dehydrogenase 2 (311 aa).

Positions 14, 35, and 40 each coordinate NAD(+). Residues Arg90 and 122-125 (NPCD) each bind substrate. Residues 120 to 122 (ATN) and Thr145 contribute to the NAD(+) site. 150 to 153 (DTTR) serves as a coordination point for substrate. His177 (proton acceptor) is an active-site residue. A substrate-binding site is contributed by Thr230.

This sequence belongs to the LDH/MDH superfamily. LDH family. Homotetramer.

The protein resides in the cytoplasm. The enzyme catalyses (S)-lactate + NAD(+) = pyruvate + NADH + H(+). Its pathway is fermentation; pyruvate fermentation to lactate; (S)-lactate from pyruvate: step 1/1. Catalyzes the conversion of lactate to pyruvate. The protein is L-lactate dehydrogenase 2 of Listeria monocytogenes serovar 1/2a (strain ATCC BAA-679 / EGD-e).